Consider the following 413-residue polypeptide: Cardiolipin synthase B (413 aa).

2 consecutive PLD phosphodiesterase domains span residues 108 to 135 (IFRR…SAEH) and 285 to 312 (RRRP…DPLS). Active-site residues include His113, Lys115, Asp120, His290, Lys292, and Asp297. Residues 388–413 (AQVPPPAQPEMETQDRVDPENTGVKP) form a disordered region.

It belongs to the phospholipase D family. Cardiolipin synthase subfamily. ClsB sub-subfamily.

The protein resides in the cell membrane. It carries out the reaction 2 a 1,2-diacyl-sn-glycero-3-phospho-(1'-sn-glycerol) = a cardiolipin + glycerol. Catalyzes the phosphatidyl group transfer from one phosphatidylglycerol molecule to another to form cardiolipin (CL) (diphosphatidylglycerol) and glycerol. This Salmonella typhimurium (strain LT2 / SGSC1412 / ATCC 700720) protein is Cardiolipin synthase B.